The following is a 227-amino-acid chain: Octanoyltransferase (227 aa).

One can recognise a BPL/LPL catalytic domain in the interval 34–212 (RQREDGLMLL…AFAEVFPVTW (179 aa)). Substrate contacts are provided by residues 76–83 (RGGEVTYH), 143–145 (AIA), and 156–158 (GFA). The active-site Acyl-thioester intermediate is the Cys174.

It belongs to the LipB family.

The protein localises to the cytoplasm. The enzyme catalyses octanoyl-[ACP] + L-lysyl-[protein] = N(6)-octanoyl-L-lysyl-[protein] + holo-[ACP] + H(+). Its pathway is protein modification; protein lipoylation via endogenous pathway; protein N(6)-(lipoyl)lysine from octanoyl-[acyl-carrier-protein]: step 1/2. Its function is as follows. Catalyzes the transfer of endogenously produced octanoic acid from octanoyl-acyl-carrier-protein onto the lipoyl domains of lipoate-dependent enzymes. Lipoyl-ACP can also act as a substrate although octanoyl-ACP is likely to be the physiological substrate. In Synechocystis sp. (strain ATCC 27184 / PCC 6803 / Kazusa), this protein is Octanoyltransferase.